The sequence spans 148 residues: MAPPSVPIVYAGGRGGCPGGYHGLVLYVPRGLLEETRAHLLREAPKEGVGLWAGRREVERVIPLPNVHPSPLTAYLADPLALLKALKALEREGLSLLAIYHSHPKGPALPSPRDIKEARWRVPYVIFGTDGVRAFLLPEGQEVALVVL.

The region spanning 22-148 is the MPN domain; it reads HGLVLYVPRG…EGQEVALVVL (127 aa). Glutamate 47 acts as the Proton donor/acceptor in catalysis. Zn(2+) contacts are provided by histidine 101, histidine 103, and aspartate 114. The short motif at 101–114 is the JAMM motif element; it reads HSHPKGPALPSPRD.

The protein belongs to the peptidase M67B family. The cofactor is Zn(2+).

Probable metalloprotease that cleaves the ubiquitin-like modifier protein TtuB from protein conjugates, hydrolyzing the isopeptide bond between a lysine residue of the target protein and the C-terminal glycine of the modifier protein. Does not seem to work for all the TtuB conjugates. The chain is Probable TtuB-protein conjugate cleaving protease from Thermus thermophilus (strain ATCC BAA-163 / DSM 7039 / HB27).